We begin with the raw amino-acid sequence, 1207 residues long: MAFASSSSSIVLSKCEFDVFVSFRGADTRHDFTSHLVKYLRGKGIDVFSDAKLRGGEYISLLFDRIEQSKMSIVVFSEDYANSWWCLEEVGKIMQRRKEFNHGVLPIFYKVSKSDVSNQTGSFEAVFQSPTKIFNGDEQKIEELKVALKTASNIRGFVYPENSSEPDFLDEIVKNTFRMLNELSPCVIPDDLPGIESRSKELEKLLMFDNDECVRVVGVLGMTGIGKTTVADIVYKQNFQRFDGYEFLEDIEDNSKRYGLPYLYQKLLHKLLDGENVDVRAQGRPENFLRNKKLFIVLDNVTEEKQIEYLIGKKNVYRQGSRIVIITRDKKLLQKNADATYVVPRLNDREAMELFCLQVFGNHYPTEEFVDLSNDFVCYAKGLPLALKLLGKGLLTHDINYWKKKLEFLQVNPDKELQKELKSSYKALDDDQKSVFLDIACFFRSEKADFVSSILKSDDIDAKDVMRELEEKCLVTISYDRIEMHDLLHAMGKEIGKEKSIRKAGERRRLWNHKDIRDILEHNTGTECVRGIFLNMSEVRRIKLFPAAFTMLSKLKFLKFHSSHCSQWCDNDHIFQCSKVPDHFPDELVYLHWQGYPYDCLPSDFDPKELVDLSLRYSHIKQLWEDEKNTESLRWVDLGQSKDLLNLSGLSRAKNLERLDLEGCTSLDLLGSVKQMNELIYLNLRDCTSLESLPKGFKIKSLKTLILSGCLKLKDFHIISESIESLHLEGTAIERVVEHIESLHSLILLNLKNCEKLKYLPNDLYKLKSLQELVLSGCSALESLPPIKEKMECLEILLMDGTSIKQTPEMSCLSNLKICSFCRPVIDDSTGLVVLPFSGNSFLSDLYLTNCNIDKLPDKFSSLRSLRCLCLSRNNIETLPESIEKLYSLLLLDLKHCCRLKSLPLLPSNLQYLDAHGCGSLENVSKPLTIPLVTERMHTTFIFTDCFKLNQAEKEDIVAQAQLKSQLLARTSRHHNHKGLLLDPLVAVCFPGHDIPSWFSHQKMGSLIETDLLPHWCNSKFIGASLCVVVTFKDHEGHHANRLSVRCKSKFKSQNGQFISFSFCLGGWNESCGSSCHEPRKLGSDHVFISYNNCNVPVFKWSEETNEGNRCHPTSASFEFYLTDETERKLECCEILRCGMNFLYARDENDRKFQGIRVTDTVERTSSEALVTIRGQSHSRIEERRYGRIRDEIMDMTGSSMIGGPES.

The TIR domain occupies 15–180 (CEFDVFVSFR…EIVKNTFRML (166 aa)). Residue E89 is part of the active site. Residues 201–445 (ELEKLLMFDN…FLDIACFFRS (245 aa)) enclose the NB-ARC domain. LRR repeat units follow at residues 607-630 (PKEL…EKNT), 653-676 (AKNL…VKQM), 677-699 (NELI…GFKI), 720-743 (SESI…IESL), 744-767 (HSLI…LYKL), 769-791 (SLQE…KEKM), 792-815 (ECLE…CLSN), 840-862 (NSFL…KFSS), and 863-886 (LRSL…IEKL).

Belongs to the disease resistance TIR-NB-LRR family.

The catalysed reaction is NAD(+) + H2O = ADP-D-ribose + nicotinamide + H(+). Functionally, disease resistance protein that cooperates with RPP2A to confer resistance to Hyaloperonospora parasitica isolate Cala2. The protein is Disease resistance protein RPP2B of Arabidopsis thaliana (Mouse-ear cress).